Consider the following 157-residue polypeptide: Nucleoside diphosphate kinase (157 aa).

ATP is bound by residues Lys-12, Phe-60, Arg-88, Thr-94, and Arg-105. Residue His-121 is the Pros-phosphohistidine intermediate of the active site.

It belongs to the NDK family. The cofactor is Mg(2+).

The protein localises to the cytoplasm. It catalyses the reaction a 2'-deoxyribonucleoside 5'-diphosphate + ATP = a 2'-deoxyribonucleoside 5'-triphosphate + ADP. The enzyme catalyses a ribonucleoside 5'-diphosphate + ATP = a ribonucleoside 5'-triphosphate + ADP. Major role in the synthesis of nucleoside triphosphates other than ATP. The ATP gamma phosphate is transferred to the NDP beta phosphate via a ping-pong mechanism, using a phosphorylated active-site intermediate. The polypeptide is Nucleoside diphosphate kinase (Pyrococcus horikoshii (strain ATCC 700860 / DSM 12428 / JCM 9974 / NBRC 100139 / OT-3)).